The sequence spans 339 residues: Nitrilase 2 (339 aa).

Serine 2 carries the N-acetylserine modification. The CN hydrolase domain occupies 18 to 290; it reads VRATIVQAST…EGLITADLDL (273 aa). The Proton acceptor role is filled by glutamate 58. Lysine 145 functions as the Proton donor in the catalytic mechanism. Cysteine 179 serves as the catalytic Nucleophile.

Belongs to the carbon-nitrogen hydrolase superfamily. Nitrilase family.

The protein resides in the cell membrane. It catalyses the reaction a nitrile + 2 H2O = a carboxylate + NH4(+). Can convert indole-3-acetonitrile to the plant hormone indole-3-acetic acid. The polypeptide is Nitrilase 2 (NIT2) (Arabidopsis thaliana (Mouse-ear cress)).